A 258-amino-acid polypeptide reads, in one-letter code: UPF0246 protein YaaA (258 aa).

This sequence belongs to the UPF0246 family.

This chain is UPF0246 protein YaaA, found in Escherichia coli (strain SE11).